The sequence spans 57 residues: Small ribosomal subunit protein bS21 (57 aa).

Positions 32–42 (VRRREHYEKPS) are enriched in basic and acidic residues. A disordered region spans residues 32–57 (VRRREHYEKPSQRRKRKLEASRRRRR). The span at 43–57 (QRRKRKLEASRRRRR) shows a compositional bias: basic residues.

It belongs to the bacterial ribosomal protein bS21 family.

This chain is Small ribosomal subunit protein bS21, found in Synechococcus elongatus (strain ATCC 33912 / PCC 7942 / FACHB-805) (Anacystis nidulans R2).